Consider the following 676-residue polypeptide: Transketolase 7 (676 aa).

Position 36 (histidine 36) interacts with substrate. Residues histidine 76 and 125 to 127 each bind thiamine diphosphate; that span reads GPL. Aspartate 166 contributes to the Mg(2+) binding site. Thiamine diphosphate-binding residues include glycine 167 and asparagine 196. Asparagine 196 and isoleucine 198 together coordinate Mg(2+). Residues histidine 273, arginine 367, and serine 394 each coordinate substrate. Histidine 273 contributes to the thiamine diphosphate binding site. 2 residues coordinate thiamine diphosphate: glutamate 421 and phenylalanine 448. Residue glutamate 421 is the Proton donor of the active site. Substrate-binding residues include histidine 472, aspartate 480, and arginine 531.

The protein belongs to the transketolase family. As to quaternary structure, homodimer. It depends on Mg(2+) as a cofactor. The cofactor is Ca(2+). Mn(2+) is required as a cofactor. Requires Co(2+) as cofactor. Thiamine diphosphate serves as cofactor. As to expression, leaves and roots.

It carries out the reaction D-sedoheptulose 7-phosphate + D-glyceraldehyde 3-phosphate = aldehydo-D-ribose 5-phosphate + D-xylulose 5-phosphate. Could be involved in the conversion of sugars, which are a major phenomenon in the rehydration process. Functionally, catalyzes the transfer of a two-carbon ketol group from a ketose donor to an aldose acceptor, via a covalent intermediate with the cofactor thiamine pyrophosphate. The protein is Transketolase 7 (TKT7) of Craterostigma plantagineum (Blue gem).